A 359-amino-acid polypeptide reads, in one-letter code: Fructose-bisphosphate aldolase 1 (359 aa).

Ser50 is a D-glyceraldehyde 3-phosphate binding site. Asp83 (proton donor) is an active-site residue. The Zn(2+) site is built by His84, Asp105, Glu142, and His198. Gly199 lines the dihydroxyacetone phosphate pocket. Residue His232 participates in Zn(2+) binding. Residues 233 to 235 (GSS) and 275 to 278 (NIDT) each bind dihydroxyacetone phosphate.

This sequence belongs to the class II fructose-bisphosphate aldolase family. Homodimer. Zn(2+) is required as a cofactor.

It carries out the reaction beta-D-fructose 1,6-bisphosphate = D-glyceraldehyde 3-phosphate + dihydroxyacetone phosphate. It functions in the pathway carbohydrate biosynthesis; Calvin cycle. It participates in carbohydrate degradation; glycolysis; D-glyceraldehyde 3-phosphate and glycerone phosphate from D-glucose: step 4/4. In terms of biological role, catalyzes the aldol condensation of dihydroxyacetone phosphate (DHAP or glycerone-phosphate) with glyceraldehyde 3-phosphate (G3P) to form fructose 1,6-bisphosphate (FBP) in gluconeogenesis and the reverse reaction in glycolysis. This is Fructose-bisphosphate aldolase 1 (cfxA) from Cereibacter sphaeroides (Rhodobacter sphaeroides).